We begin with the raw amino-acid sequence, 313 residues long: Protein ABA AND ROS SENSITIVE 1 (313 aa).

The Nuclear localization signal 1 motif lies at 5–12 (AKKKAMFR). Residues 39 to 61 (CRVCNVVLKSESLWDVHQASRKH) form a C2H2-type zinc finger. Residues 115-131 (ARAEVEPAKSKNLEQSK) show a composition bias toward basic and acidic residues. Disordered stretches follow at residues 115–189 (ARAE…LPTG), 232–254 (MEEEEVDAAETIEEEEQREQRSY), and 271–313 (ARLA…AQHL). Over residues 155–176 (TDSSNTKTTSEPKQSQTQTTGP) the composition is skewed to polar residues. Residues 232 to 248 (MEEEEVDAAETIEEEEQ) are compositionally biased toward acidic residues. Positions 232–271 (MEEEEVDAAETIEEEEQREQRSYKEKVEILKRKKMELKAA) form a coiled coil. Positions 274-281 (AKRSKTSE) match the Nuclear localization signal 2 motif. Positions 293-305 (ESPSDEEDDEDSA) are enriched in acidic residues.

Mostly expressed in siliques and, to a lower extent, in roots. Barely deteclable in leaves and stems.

It localises to the nucleus. It is found in the cytoplasm. Functionally, essential for breaking seed dormancy before seed germination. Prevents reactive oxygen species (ROS) accumulation in response to abscisic acid (ABA) and oxidative stress, probably by repressing the accumulation of ABA-induced ROS-scavenging enzymes (e.g. CSD3). This is Protein ABA AND ROS SENSITIVE 1 from Arabidopsis thaliana (Mouse-ear cress).